The following is a 365-amino-acid chain: Uroporphyrinogen decarboxylase (365 aa).

Residues 27–31 (RQAGR), Asp-77, Tyr-154, Thr-209, and His-327 each bind substrate.

This sequence belongs to the uroporphyrinogen decarboxylase family. Homodimer.

It localises to the cytoplasm. It catalyses the reaction uroporphyrinogen III + 4 H(+) = coproporphyrinogen III + 4 CO2. The protein operates within porphyrin-containing compound metabolism; protoporphyrin-IX biosynthesis; coproporphyrinogen-III from 5-aminolevulinate: step 4/4. In terms of biological role, catalyzes the decarboxylation of four acetate groups of uroporphyrinogen-III to yield coproporphyrinogen-III. The protein is Uroporphyrinogen decarboxylase of Nitrosospira multiformis (strain ATCC 25196 / NCIMB 11849 / C 71).